The sequence spans 308 residues: MLNPSDFIEEAVEEIRSTVGNEKAIIALSGGVDSSVASVLAGRAIGDNLTAVFVDHGLLREGEAEYVRKTFSERLNFRYIDASEEFLKELEGVTDPEEKRKIIGRVFIEVFERVAEEIGARYLVQGTIAPDWIESEGQIKSHHNVALPHGLVLEIVEPIRELYKDEVREIGLELGLPREMIQRQPFPGPGLAVRIVGEITREKIEICRRANAIVEEEVVESGLHESLWQYFAVLTDTMVTGVKGDVRDFGYLVVIRMVESLDAMTASVPELPWDLIKRISKRITAEIPEVTHVALSVSDKPPSTIEFA.

The GMPS ATP-PPase domain occupies 2-183 (LNPSDFIEEA…LGLPREMIQR (182 aa)). An ATP-binding site is contributed by 29–35 (SGGVDSS).

In terms of assembly, heterodimer composed of a glutamine amidotransferase subunit (A) and a GMP-binding subunit (B).

The catalysed reaction is XMP + L-glutamine + ATP + H2O = GMP + L-glutamate + AMP + diphosphate + 2 H(+). It participates in purine metabolism; GMP biosynthesis; GMP from XMP (L-Gln route): step 1/1. Its function is as follows. Catalyzes the synthesis of GMP from XMP. This is GMP synthase [glutamine-hydrolyzing] subunit B (guaAB) from Methanothermobacter thermautotrophicus (strain ATCC 29096 / DSM 1053 / JCM 10044 / NBRC 100330 / Delta H) (Methanobacterium thermoautotrophicum).